We begin with the raw amino-acid sequence, 421 residues long: 3-hydroxy-3-methylglutaryl-coenzyme A reductase (421 aa).

Residues E109, K240, and D315 each act as charge relay system in the active site. Catalysis depends on H410, which acts as the Proton donor.

This sequence belongs to the HMG-CoA reductase family.

It catalyses the reaction (R)-mevalonate + 2 NADP(+) + CoA = (3S)-3-hydroxy-3-methylglutaryl-CoA + 2 NADPH + 2 H(+). It participates in metabolic intermediate biosynthesis; (R)-mevalonate biosynthesis; (R)-mevalonate from acetyl-CoA: step 3/3. In terms of biological role, converts HMG-CoA to mevalonate. This Aeropyrum pernix (strain ATCC 700893 / DSM 11879 / JCM 9820 / NBRC 100138 / K1) protein is 3-hydroxy-3-methylglutaryl-coenzyme A reductase (hmgA).